Reading from the N-terminus, the 371-residue chain is Queuine tRNA-ribosyltransferase (371 aa).

Aspartate 92 functions as the Proton acceptor in the catalytic mechanism. Residues 92–96 (DSGGF), aspartate 147, glutamine 190, and glycine 217 contribute to the substrate site. Residues 248 to 254 (GVGKPID) form an RNA binding region. Residue aspartate 267 is the Nucleophile of the active site. Residues 272–276 (TRSGR) are RNA binding; important for wobble base 34 recognition.

It belongs to the queuine tRNA-ribosyltransferase family. In terms of assembly, homodimer. Within each dimer, one monomer is responsible for RNA recognition and catalysis, while the other monomer binds to the replacement base PreQ1.

The catalysed reaction is 7-aminomethyl-7-carbaguanine + guanosine(34) in tRNA = 7-aminomethyl-7-carbaguanosine(34) in tRNA + guanine. It functions in the pathway tRNA modification; tRNA-queuosine biosynthesis. Its function is as follows. Catalyzes the base-exchange of a guanine (G) residue with the queuine precursor 7-aminomethyl-7-deazaguanine (PreQ1) at position 34 (anticodon wobble position) in tRNAs with GU(N) anticodons (tRNA-Asp, -Asn, -His and -Tyr). Catalysis occurs through a double-displacement mechanism. The nucleophile active site attacks the C1' of nucleotide 34 to detach the guanine base from the RNA, forming a covalent enzyme-RNA intermediate. The proton acceptor active site deprotonates the incoming PreQ1, allowing a nucleophilic attack on the C1' of the ribose to form the product. After dissociation, two additional enzymatic reactions on the tRNA convert PreQ1 to queuine (Q), resulting in the hypermodified nucleoside queuosine (7-(((4,5-cis-dihydroxy-2-cyclopenten-1-yl)amino)methyl)-7-deazaguanosine). The protein is Queuine tRNA-ribosyltransferase of Caulobacter vibrioides (strain ATCC 19089 / CIP 103742 / CB 15) (Caulobacter crescentus).